Consider the following 230-residue polypeptide: Ribonuclease 3 (230 aa).

The 124-residue stretch at 10-133 (DPRLLSRIGY…IIGAIYLDSG (124 aa)) folds into the RNase III domain. E46 serves as a coordination point for Mg(2+). The active site involves D50. Mg(2+) contacts are provided by D119 and E122. The active site involves E122. A DRBM domain is found at 161-230 (DPKSRLQEYL…AAEILKLLEQ (70 aa)).

It belongs to the ribonuclease III family. In terms of assembly, homodimer. Mg(2+) is required as a cofactor.

The protein localises to the cytoplasm. It carries out the reaction Endonucleolytic cleavage to 5'-phosphomonoester.. Functionally, digests double-stranded RNA. Involved in the processing of primary rRNA transcript to yield the immediate precursors to the large and small rRNAs (23S and 16S). Processes some mRNAs, and tRNAs when they are encoded in the rRNA operon. Processes pre-crRNA and tracrRNA of type II CRISPR loci if present in the organism. In Acinetobacter pittii (strain PHEA-2), this protein is Ribonuclease 3 (rnc).